Consider the following 250-residue polypeptide: UPF0309 protein BH0227 (250 aa).

Residues 31–214 form the SIS domain; the sequence is VAESIQNGGI…KRMADNGYEP (184 aa).

This sequence belongs to the UPF0309 family.

The chain is UPF0309 protein BH0227 from Halalkalibacterium halodurans (strain ATCC BAA-125 / DSM 18197 / FERM 7344 / JCM 9153 / C-125) (Bacillus halodurans).